The sequence spans 188 residues: Elongation factor P (188 aa).

The protein belongs to the elongation factor P family.

It is found in the cytoplasm. Its pathway is protein biosynthesis; polypeptide chain elongation. Involved in peptide bond synthesis. Stimulates efficient translation and peptide-bond synthesis on native or reconstituted 70S ribosomes in vitro. Probably functions indirectly by altering the affinity of the ribosome for aminoacyl-tRNA, thus increasing their reactivity as acceptors for peptidyl transferase. In Wolbachia sp. subsp. Drosophila simulans (strain wRi), this protein is Elongation factor P.